The following is a 130-amino-acid chain: Small ribosomal subunit protein uS8 (130 aa).

It belongs to the universal ribosomal protein uS8 family. In terms of assembly, component of the 40S ribosomal subunit. Part of the small subunit (SSU) processome, composed of more than 70 proteins and the RNA chaperone small nucleolar RNA (snoRNA) U3.

It is found in the cytoplasm. Its subcellular location is the nucleus. It localises to the nucleolus. Component of the small ribosomal subunit. Part of the small subunit (SSU) processome, first precursor of the small eukaryotic ribosomal subunit. During the assembly of the SSU processome in the nucleolus, many ribosome biogenesis factors, an RNA chaperone and ribosomal proteins associate with the nascent pre-rRNA and work in concert to generate RNA folding, modifications, rearrangements and cleavage as well as targeted degradation of pre-ribosomal RNA by the RNA exosome. Required for erythropoiesis during embryonic development. This Danio rerio (Zebrafish) protein is Small ribosomal subunit protein uS8.